We begin with the raw amino-acid sequence, 21 residues long: Basic phospholipase A2 BjIV (21 aa).

The protein belongs to the phospholipase A2 family. Group II subfamily. Can form dimers, trimers and tetramers. It depends on Ca(2+) as a cofactor. Contains seven disulfide bonds. As to expression, expressed by the venom gland.

It localises to the secreted. It catalyses the reaction a 1,2-diacyl-sn-glycero-3-phosphocholine + H2O = a 1-acyl-sn-glycero-3-phosphocholine + a fatty acid + H(+). Inhibited by crotapotin. Its function is as follows. Snake venom phospholipase A2 has a high enzymatic activity and produces moderate myonecrosis in skeletal muscle, but shows no neuromuscular activity in mouse phrenic nerve-diaphragm preparations. PLA2 catalyzes the calcium-dependent hydrolysis of the 2-acyl groups in 3-sn-phosphoglycerides. The sequence is that of Basic phospholipase A2 BjIV from Bothrops jararacussu (Jararacussu).